A 385-amino-acid chain; its full sequence is Queuine tRNA-ribosyltransferase (385 aa).

The active-site Proton acceptor is the D93. Residues 93–97 (DSGGF), D147, Q191, and G218 each bind substrate. The tract at residues 249–255 (GVGKPED) is RNA binding. D268 serves as the catalytic Nucleophile. Residues 273–277 (TRNAR) are RNA binding; important for wobble base 34 recognition. Zn(2+) is bound by residues C306, C308, C311, and H337.

Belongs to the queuine tRNA-ribosyltransferase family. Homodimer. Within each dimer, one monomer is responsible for RNA recognition and catalysis, while the other monomer binds to the replacement base PreQ1. Zn(2+) is required as a cofactor.

It catalyses the reaction 7-aminomethyl-7-carbaguanine + guanosine(34) in tRNA = 7-aminomethyl-7-carbaguanosine(34) in tRNA + guanine. It functions in the pathway tRNA modification; tRNA-queuosine biosynthesis. Its function is as follows. Catalyzes the base-exchange of a guanine (G) residue with the queuine precursor 7-aminomethyl-7-deazaguanine (PreQ1) at position 34 (anticodon wobble position) in tRNAs with GU(N) anticodons (tRNA-Asp, -Asn, -His and -Tyr). Catalysis occurs through a double-displacement mechanism. The nucleophile active site attacks the C1' of nucleotide 34 to detach the guanine base from the RNA, forming a covalent enzyme-RNA intermediate. The proton acceptor active site deprotonates the incoming PreQ1, allowing a nucleophilic attack on the C1' of the ribose to form the product. After dissociation, two additional enzymatic reactions on the tRNA convert PreQ1 to queuine (Q), resulting in the hypermodified nucleoside queuosine (7-(((4,5-cis-dihydroxy-2-cyclopenten-1-yl)amino)methyl)-7-deazaguanosine). The polypeptide is Queuine tRNA-ribosyltransferase (Pasteurella multocida (strain Pm70)).